Consider the following 238-residue polypeptide: Large ribosomal subunit protein uL1 (238 aa).

Belongs to the universal ribosomal protein uL1 family. In terms of assembly, part of the 50S ribosomal subunit.

Its function is as follows. Binds directly to 23S rRNA. The L1 stalk is quite mobile in the ribosome, and is involved in E site tRNA release. In terms of biological role, protein L1 is also a translational repressor protein, it controls the translation of the L11 operon by binding to its mRNA. The polypeptide is Large ribosomal subunit protein uL1 (Trichodesmium erythraeum (strain IMS101)).